Reading from the N-terminus, the 266-residue chain is Ribosomal RNA small subunit methyltransferase A (266 aa).

Residues asparagine 10, isoleucine 12, glycine 37, glutamate 58, aspartate 82, and asparagine 105 each contribute to the S-adenosyl-L-methionine site.

This sequence belongs to the class I-like SAM-binding methyltransferase superfamily. rRNA adenine N(6)-methyltransferase family. RsmA subfamily.

It is found in the cytoplasm. It catalyses the reaction adenosine(1518)/adenosine(1519) in 16S rRNA + 4 S-adenosyl-L-methionine = N(6)-dimethyladenosine(1518)/N(6)-dimethyladenosine(1519) in 16S rRNA + 4 S-adenosyl-L-homocysteine + 4 H(+). Functionally, specifically dimethylates two adjacent adenosines (A1518 and A1519) in the loop of a conserved hairpin near the 3'-end of 16S rRNA in the 30S particle. May play a critical role in biogenesis of 30S subunits. This chain is Ribosomal RNA small subunit methyltransferase A, found in Mycoplasma mycoides subsp. mycoides SC (strain CCUG 32753 / NCTC 10114 / PG1).